The following is a 542-amino-acid chain: Cytochrome P450 monooxygenase 91 (542 aa).

A signal peptide spans 1–22 (MLDILRFVLICGILWILRRVLL). N-linked (GlcNAc...) asparagine glycans are attached at residues N299 and N392. C482 is a binding site for heme.

This sequence belongs to the cytochrome P450 family. The cofactor is heme.

It participates in secondary metabolite biosynthesis. Its function is as follows. Cytochrome P450 monooxygenase that is able to use dehydroabietic acid as a substrate for oxidation. This Postia placenta (strain ATCC 44394 / Madison 698-R) (Brown rot fungus) protein is Cytochrome P450 monooxygenase 91.